The primary structure comprises 541 residues: Threonine--tRNA ligase catalytic subunit (541 aa).

The tract at residues Asp135–Pro429 is catalytic. Positions 227, 278, and 406 each coordinate Zn(2+).

The protein belongs to the class-II aminoacyl-tRNA synthetase family. In terms of assembly, homodimer. Probably interacts with its editing subunit. It depends on Zn(2+) as a cofactor.

It is found in the cytoplasm. It carries out the reaction tRNA(Thr) + L-threonine + ATP = L-threonyl-tRNA(Thr) + AMP + diphosphate + H(+). Catalyzes the attachment of threonine to tRNA(Thr) in a two-step reaction: L-threonine is first activated by ATP to form Thr-AMP and then transferred to the acceptor end of tRNA(Thr). Also activates L-serine and transfers it to tRNA(Thr) but cannot deacylate incorrectly charged amino acid; unlike most archaea the editing function is found in a freestanding protein. The polypeptide is Threonine--tRNA ligase catalytic subunit (Metallosphaera sedula (strain ATCC 51363 / DSM 5348 / JCM 9185 / NBRC 15509 / TH2)).